Here is a 258-residue protein sequence, read N- to C-terminus: MLAKRIIPCLDVRDGQVVKGVQFRNHEIIGDIVPLAKRYADEGADELVFYDITASSDGRVVDKSWVSRVAEVIDIPFCVAGGIRSIDDAAKILSFGADKISVNSPALSDPTLITRLADRFGVQCIVVGIDTWFDDATGKYHVNQYTGDENRTRVTQWETLDWVQEVQQRGAGEIVLNMMNQDGVRNGYDLTQLKKVRDVCRVPLIASGGAGTMEHFLEAFRDADVDGALAASVFHKQIINIGELKAYLAGQGVEIRIC.

Active-site residues include Asp11 and Asp130.

It belongs to the HisA/HisF family. As to quaternary structure, heterodimer of HisH and HisF.

The protein localises to the cytoplasm. It catalyses the reaction 5-[(5-phospho-1-deoxy-D-ribulos-1-ylimino)methylamino]-1-(5-phospho-beta-D-ribosyl)imidazole-4-carboxamide + L-glutamine = D-erythro-1-(imidazol-4-yl)glycerol 3-phosphate + 5-amino-1-(5-phospho-beta-D-ribosyl)imidazole-4-carboxamide + L-glutamate + H(+). It functions in the pathway amino-acid biosynthesis; L-histidine biosynthesis; L-histidine from 5-phospho-alpha-D-ribose 1-diphosphate: step 5/9. Its function is as follows. IGPS catalyzes the conversion of PRFAR and glutamine to IGP, AICAR and glutamate. The HisF subunit catalyzes the cyclization activity that produces IGP and AICAR from PRFAR using the ammonia provided by the HisH subunit. This is Imidazole glycerol phosphate synthase subunit HisF from Salmonella arizonae (strain ATCC BAA-731 / CDC346-86 / RSK2980).